Here is a 319-residue protein sequence, read N- to C-terminus: MNPGRGGAYAAGRDGTRGTRRPHGLSHLDLLESESVHIFREVAGEFERPVILFSGGKDSIVMLHLALKSFAPAPVPFALLHVDTGHNFPEVIAYRDRVVAALGLRLEVASVQDFIDNGTLRERPDGTRNPLQTVPLLDAIGRHRFDAVFGGGRRDEEKARAKERVFSLRDEFGGWDPRRQRPELWRLYNGRHAPGEHVRVFPLSNWTELDVWQYVAREEIELPTIYYAHEREVFRRGGMWLAPGEWGGPREGEAVEKRRVRYRTVGDMSCTGAVDSAAATVADVVAEIATSRLTERGATRADDKLSEAAMEDRKREGYF.

Disordered regions lie at residues 1–22 (MNPGRGGAYAAGRDGTRGTRRP) and 296–319 (RGATRADDKLSEAAMEDRKREGYF).

Belongs to the PAPS reductase family. CysD subfamily.

It carries out the reaction sulfate + ATP + H(+) = adenosine 5'-phosphosulfate + diphosphate. Its pathway is antibiotic biosynthesis; mitomycin C biosynthesis. Functionally, with CysN forms the ATP sulfurylase (ATPS) that catalyzes the adenylation of sulfate producing adenosine 5'-phosphosulfate (APS) and diphosphate, the first enzymatic step in sulfur assimilation pathway. APS synthesis involves the formation of a high-energy phosphoric-sulfuric acid anhydride bond driven by GTP hydrolysis by CysN coupled to ATP hydrolysis by CysD. The sequence is that of Sulfate adenylyltransferase subunit 2 (mmcV) from Streptomyces lavendulae.